The sequence spans 1465 residues: Gag-Pol polyprotein (1465 aa).

Residue Gly2 is the site of N-myristoyl glycine; by host attachment. Residues 16-22 (FEHIRLR) carry the Nuclear export signal motif. Positions 26–32 (KKKYQIK) match the Nuclear localization signal motif. The segment at 116-144 (NAERNTTETSSGQKKNDKGVTVPPGGSQN) is disordered. 2 consecutive CCHC-type zinc fingers follow at residues 402–419 (VKCYNCGKFGHMQRQCPE) and 423–440 (MRCLKCGKPGHLAKDCRG). Residues 532 to 603 (IRALLDTGAD…TPINIIGRNI (72 aa)) form the Peptidase A2 domain. Catalysis depends on Asp537, which acts as the For protease activity; shared with dimeric partner. One can recognise a Reverse transcriptase domain in the interval 659–849 (EGKISKIGGE…PPYEWMGYKL (191 aa)). Residues Asp725, Asp800, and Asp801 each contribute to the Mg(2+) site. The interval 842-850 (YEWMGYKLW) is RT 'primer grip'. The Tryptophan repeat motif motif lies at 1012–1028 (WEQWWADYWQVSWIPDW). Residues 1048-1171 (IPKEDVYYVD…IDKLVSQGMR (124 aa)) enclose the RNase H type-1 domain. Positions 1057, 1092, 1112, and 1163 each coordinate Mg(2+). The Integrase-type zinc finger occupies 1177-1218 (EKIEEAQEEHERYHNNWRNLADTYGLPQIVAKEIVAMCPKCQ). Positions 1186, 1190, 1214, and 1217 each coordinate Zn(2+). In terms of domain architecture, Integrase catalytic spans 1228–1378 (VDASPGVWQM…TPAERLINMI (151 aa)). Residues Asp1238 and Asp1290 each coordinate Mg(2+). The integrase-type DNA-binding region spans 1397–1444 (FRVYYREGRDPVWKGPGQLIWKGEGAVVIKGGVELKEYPRRKAKIIKD).

In terms of assembly, homotrimer. Interacts with gp41 (via C-terminus). As to quaternary structure, homodimer. The active site consists of two apposed aspartic acid residues. Heterodimer of p66 RT and p51 RT (RT p66/p51). Heterodimerization of RT is essential for DNA polymerase activity. Despite the sequence identities, p66 RT and p51 RT have distinct folding. In terms of assembly, homotetramer; may further associate as a homohexadecamer. Requires Mg(2+) as cofactor. In terms of processing, specific enzymatic cleavages by the viral protease yield mature proteins. The protease is released by autocatalytic cleavage. The polyprotein is cleaved during and after budding, this process is termed maturation. Proteolytic cleavage of p66 RT removes the RNase H domain to yield the p51 RT subunit. Post-translationally, capsid protein p24 is phosphorylated.

The protein resides in the virion. It localises to the host nucleus. It is found in the host cytoplasm. The protein localises to the host cell membrane. The enzyme catalyses Specific for a P1 residue that is hydrophobic, and P1' variable, but often Pro.. The catalysed reaction is Endohydrolysis of RNA in RNA/DNA hybrids. Three different cleavage modes: 1. sequence-specific internal cleavage of RNA. Human immunodeficiency virus type 1 and Moloney murine leukemia virus enzymes prefer to cleave the RNA strand one nucleotide away from the RNA-DNA junction. 2. RNA 5'-end directed cleavage 13-19 nucleotides from the RNA end. 3. DNA 3'-end directed cleavage 15-20 nucleotides away from the primer terminus.. It carries out the reaction 3'-end directed exonucleolytic cleavage of viral RNA-DNA hybrid.. It catalyses the reaction DNA(n) + a 2'-deoxyribonucleoside 5'-triphosphate = DNA(n+1) + diphosphate. With respect to regulation, the viral protease is inhibited by many synthetic protease inhibitors (PIs), such as amprenavir, atazanavir, indinavir, loprinavir, nelfinavir, ritonavir and saquinavir. RT can be inhibited either by nucleoside RT inhibitors (NRTIs) or by non nucleoside RT inhibitors (NNRTIs). NRTIs act as chain terminators, whereas NNRTIs inhibit DNA polymerization by binding a small hydrophobic pocket near the RT active site and inducing an allosteric change in this region. Classical NRTIs are abacavir, adefovir (PMEA), didanosine (ddI), lamivudine (3TC), stavudine (d4T), tenofovir (PMPA), zalcitabine (ddC), and zidovudine (AZT). Classical NNRTIs are atevirdine (BHAP U-87201E), delavirdine, efavirenz (DMP-266), emivirine (I-EBU), and nevirapine (BI-RG-587). The tritherapies used as a basic effective treatment of AIDS associate two NRTIs and one NNRTI. Use of protease inhibitors in tritherapy regimens permit more ambitious therapeutic strategies. Gag-Pol polyprotein and Gag polyprotein may regulate their own translation, by the binding genomic RNA in the 5'-UTR. At low concentration, Gag-Pol and Gag would promote translation, whereas at high concentration, the polyproteins encapsidate genomic RNA and then shut off translation. In terms of biological role, matrix protein p17 has two main functions: in infected cell, it targets Gag and Gag-pol polyproteins to the plasma membrane via a multipartite membrane-binding signal, that includes its myristointegration complex. The myristoylation signal and the NLS exert conflicting influences its subcellular localization. The key regulation of these motifs might be phosphorylation of a portion of MA molecules on the C-terminal tyrosine at the time of virus maturation, by virion-associated cellular tyrosine kinase. Implicated in the release from host cell mediated by Vpu. Its function is as follows. Capsid protein p24 forms the conical core that encapsulates the genomic RNA-nucleocapsid complex in the virion. The core is constituted by capsid protein hexamer subunits. The core is disassembled soon after virion entry. Interaction with host PPIA/CYPA protects the virus from restriction by host TRIM5-alpha and from an unknown antiviral activity in host cells. This capsid restriction by TRIM5 is one of the factors which restricts SIV to the simian species. Functionally, nucleocapsid protein p7 encapsulates and protects viral dimeric unspliced (genomic) RNA. Binds these RNAs through its zinc fingers. Facilitates rearangement of nucleic acid secondary structure during retrotranscription of genomic RNA. This capability is referred to as nucleic acid chaperone activity. The aspartyl protease mediates proteolytic cleavages of Gag and Gag-Pol polyproteins during or shortly after the release of the virion from the plasma membrane. Cleavages take place as an ordered, step-wise cascade to yield mature proteins. This process is called maturation. Displays maximal activity during the budding process just prior to particle release from the cell. Also cleaves Nef and Vif, probably concomitantly with viral structural proteins on maturation of virus particles. Hydrolyzes host EIF4GI and PABP1 in order to shut off the capped cellular mRNA translation. The resulting inhibition of cellular protein synthesis serves to ensure maximal viral gene expression and to evade host immune response. In terms of biological role, reverse transcriptase/ribonuclease H (RT) is a multifunctional enzyme that converts the viral dimeric RNA genome into dsDNA in the cytoplasm, shortly after virus entry into the cell. This enzyme displays a DNA polymerase activity that can copy either DNA or RNA templates, and a ribonuclease H (RNase H) activity that cleaves the RNA strand of RNA-DNA heteroduplexes in a partially processive 3' to 5' endonucleasic mode. Conversion of viral genomic RNA into dsDNA requires many steps. A tRNA binds to the primer-binding site (PBS) situated at the 5'-end of the viral RNA. RT uses the 3' end of the tRNA primer to perform a short round of RNA-dependent minus-strand DNA synthesis. The reading proceeds through the U5 region and ends after the repeated (R) region which is present at both ends of viral RNA. The portion of the RNA-DNA heteroduplex is digested by the RNase H, resulting in a ssDNA product attached to the tRNA primer. This ssDNA/tRNA hybridizes with the identical R region situated at the 3' end of viral RNA. This template exchange, known as minus-strand DNA strong stop transfer, can be either intra- or intermolecular. RT uses the 3' end of this newly synthesized short ssDNA to perform the RNA-dependent minus-strand DNA synthesis of the whole template. RNase H digests the RNA template except for two polypurine tracts (PPTs) situated at the 5'-end and near the center of the genome. It is not clear if both polymerase and RNase H activities are simultaneous. RNase H can probably proceed both in a polymerase-dependent (RNA cut into small fragments by the same RT performing DNA synthesis) and a polymerase-independent mode (cleavage of remaining RNA fragments by free RTs). Secondly, RT performs DNA-directed plus-strand DNA synthesis using the PPTs that have not been removed by RNase H as primers. PPTs and tRNA primers are then removed by RNase H. The 3' and 5' ssDNA PBS regions hybridize to form a circular dsDNA intermediate. Strand displacement synthesis by RT to the PBS and PPT ends produces a blunt ended, linear dsDNA copy of the viral genome that includes long terminal repeats (LTRs) at both ends. Its function is as follows. Integrase catalyzes viral DNA integration into the host chromosome, by performing a series of DNA cutting and joining reactions. This enzyme activity takes place after virion entry into a cell and reverse transcription of the RNA genome in dsDNA. The first step in the integration process is 3' processing. This step requires a complex comprising the viral genome, matrix protein, Vpr and integrase. This complex is called the pre-integration complex (PIC). The integrase protein removes 2 nucleotides from each 3' end of the viral DNA, leaving recessed CA OH's at the 3' ends. In the second step, the PIC enters cell nucleus. This process is mediated through integrase and Vpr proteins, and allows the virus to infect a non dividing cell. This ability to enter the nucleus is specific of lentiviruses, other retroviruses cannot and rely on cell division to access cell chromosomes. In the third step, termed strand transfer, the integrase protein joins the previously processed 3' ends to the 5' ends of strands of target cellular DNA at the site of integration. The 5'-ends are produced by integrase-catalyzed staggered cuts, 5 bp apart. A Y-shaped, gapped, recombination intermediate results, with the 5'-ends of the viral DNA strands and the 3' ends of target DNA strands remaining unjoined, flanking a gap of 5 bp. The last step is viral DNA integration into host chromosome. This involves host DNA repair synthesis in which the 5 bp gaps between the unjoined strands are filled in and then ligated. Since this process occurs at both cuts flanking the SIV genome, a 5 bp duplication of host DNA is produced at the ends of SIV integration. Alternatively, Integrase may catalyze the excision of viral DNA just after strand transfer, this is termed disintegration. This chain is Gag-Pol polyprotein (gag-pol), found in Cercopithecidae (Old World monkeys).